The following is a 257-amino-acid chain: MLILVSPAKTLDFEQPPLTQIHTRPDFLAQSQELIQVCQQLTPSDIATLMKVSDSIAGLNAARFGEWKPDYSIDNAKQAIFAFRGDVYTGFDADTLTAAQLERTQSQLRILSGLYGLLRPLDLILPYRLEMGTALTNQKGKNLYEFWGNTLTDAVNSAVAAQGDGIIINLASNEYFKAIKPKFLNGQLITPVFKDFKNGQYKVISFFAKRARGMMARYIIDQQVSSIDGLKAFEVDGYYYSEELSKPNEPTFLREAQ.

Belongs to the UPF0246 family.

This chain is UPF0246 protein SO_3540, found in Shewanella oneidensis (strain ATCC 700550 / JCM 31522 / CIP 106686 / LMG 19005 / NCIMB 14063 / MR-1).